The chain runs to 579 residues: Arginine--tRNA ligase (579 aa).

The 'HIGH' region motif lies at 123–133 (PNLAKEMHVGH).

It belongs to the class-I aminoacyl-tRNA synthetase family. As to quaternary structure, monomer.

It is found in the cytoplasm. It catalyses the reaction tRNA(Arg) + L-arginine + ATP = L-arginyl-tRNA(Arg) + AMP + diphosphate. This is Arginine--tRNA ligase from Cellvibrio japonicus (strain Ueda107) (Pseudomonas fluorescens subsp. cellulosa).